Reading from the N-terminus, the 522-residue chain is Lysine--tRNA ligase (522 aa).

The short motif at 44–52 is the 'HIGH' region element; it reads PSGLPHIGT. The 'KMSKS' region signature appears at 290–294; that stretch reads KISKS. Lysine 293 is a binding site for ATP.

This sequence belongs to the class-I aminoacyl-tRNA synthetase family.

The protein localises to the cytoplasm. It catalyses the reaction tRNA(Lys) + L-lysine + ATP = L-lysyl-tRNA(Lys) + AMP + diphosphate. This Rickettsia massiliae (strain Mtu5) protein is Lysine--tRNA ligase.